Here is a 175-residue protein sequence, read N- to C-terminus: ATP-dependent protease subunit HslV (175 aa).

Residue T2 is part of the active site. 3 residues coordinate Na(+): A156, C159, and T162.

Belongs to the peptidase T1B family. HslV subfamily. A double ring-shaped homohexamer of HslV is capped on each side by a ring-shaped HslU homohexamer. The assembly of the HslU/HslV complex is dependent on binding of ATP.

The protein resides in the cytoplasm. It carries out the reaction ATP-dependent cleavage of peptide bonds with broad specificity.. Its activity is regulated as follows. Allosterically activated by HslU binding. Its function is as follows. Protease subunit of a proteasome-like degradation complex believed to be a general protein degrading machinery. The polypeptide is ATP-dependent protease subunit HslV (Rhizobium etli (strain CIAT 652)).